The sequence spans 68 residues: Intracellular calcium channel modulator CCP-Ts (68 aa).

The signal sequence occupies residues 1 to 23; that stretch reads MNPKLLIVIGLLLATGVCSFAKA. Cystine bridges form between Cys33-Cys47, Cys40-Cys53, and Cys46-Cys62.

It belongs to the scorpion calcin-like family. As to expression, expressed by the venom gland. In intravenously injected mice, the labeled toxin has preference for heart, liver and lungs.

Its subcellular location is the secreted. It localises to the nucleus. Cell penetrating peptide (CPP) that increases intracellular calcium release through the activation of nuclear inositol 1,4,5-trisphosphate receptors (ITPR) of cardiomyocytes, thereby causing an increase in the contraction frequency of these cells. In vivo, this toxin is not lethal to mice, hovewer anti-CPP serum reduces venom lethality, suggesting that this toxin is lethal when it acts in synergy with other venom components. The polypeptide is Intracellular calcium channel modulator CCP-Ts (Tityus serrulatus (Brazilian scorpion)).